The chain runs to 311 residues: R2-like ligand binding oxidase (311 aa).

Mn(2+)-binding residues include Glu-68, Glu-101, and His-104. The 3-(O4'-tyrosyl)-valine (Val-Tyr) cross-link spans 71–162; sequence VTQDIQPFMA…AAQVRASVTY (92 aa). Position 101 (Glu-101) interacts with Fe cation. The Fe cation site is built by Glu-167, Glu-202, and His-205.

It belongs to the ribonucleoside diphosphate reductase small chain family. R2-like ligand binding oxidase subfamily. As to quaternary structure, homodimer. Fe cation serves as cofactor. Requires Mn(2+) as cofactor.

In terms of biological role, probable oxidase that might be involved in lipid metabolism. In Mycolicibacterium paratuberculosis (strain ATCC BAA-968 / K-10) (Mycobacterium paratuberculosis), this protein is R2-like ligand binding oxidase.